The following is a 216-amino-acid chain: Vascular endothelial growth factor A (216 aa).

An N-terminal signal peptide occupies residues 1–26 (MNFLLTWIHWGLAALLYFHNAKVLQA). Intrachain disulfides connect cysteine 52-cysteine 94, cysteine 83-cysteine 128, and cysteine 87-cysteine 130. Asparagine 101 carries an N-linked (GlcNAc...) asparagine glycan. The segment at 140-161 (QEKKSKREKGKGQKRKRKRGRY) is disordered. The span at 145 to 161 (KREKGKGQKRKRKRGRY) shows a compositional bias: basic residues.

Belongs to the PDGF/VEGF growth factor family. Homodimer; disulfide-linked. Also found as heterodimer with PGF. Interacts to the FLT1/VEGFR1 and KDR/VEGFR2 receptors, heparan sulfate and heparin. Expressed in venom gland, heart, brain, liver, skeletal muscle and kidney.

It is found in the secreted. Functionally, growth factor active in angiogenesis, vasculogenesis and endothelial cell growth. Induces endothelial cell proliferation, promotes cell migration, inhibits apoptosis and induces permeabilization of blood vessels. The polypeptide is Vascular endothelial growth factor A (Protobothrops flavoviridis (Habu)).